The primary structure comprises 485 residues: MTTSGVRVRIAPSPTGEPHVGTAYIALFNYLFAKKHGGEFILRIEDTDATRSTLEYEQKVLEALRWTGLTWSEGPDVGGPYGPYRQSERKPMYWPYAEELLEKGHAFRCFCTPERLEQMREAQRAAGKPPKYDGLCLHLKAEEVTTRVAAGEANVVRMKIPTEGSCDFHDGVYGDVSIPWDSVDMQVLIKADGMPTYHMANVIDDHLMKITHVARGEEWLASVPKHILLYRYFGWDQPTFMHLSLMRNADKSKLSKRKNPTSISYYSALGYLPEALMNFLGLFFIQIAEGEELLTMEELAAKFDPEALSKAGAIFDIQKLDWLNGRWLREKLTPEDFIARTLEWAMENSRLTEGLKLAQSRISKLGELPNLAGFLVSSDVGLTPASFAGLKSKPEEIHEILTTVAADLEKMPDWNVEAIEAELRDIAERTGKKLRVVTPPLFVAVSGSSRSLPLFDSMALLGRSVVRQRLKVAIAVVATMVGSGS.

Positions 12–22 (PSPTGEPHVGT) match the 'HIGH' region motif. Residues cysteine 109, cysteine 111, cysteine 136, and histidine 138 each coordinate Zn(2+). The short motif at 253–257 (KLSKR) is the 'KMSKS' region element. Lysine 256 is a binding site for ATP.

Belongs to the class-I aminoacyl-tRNA synthetase family. Glutamate--tRNA ligase type 1 subfamily. Monomer. It depends on Zn(2+) as a cofactor.

Its subcellular location is the cytoplasm. The catalysed reaction is tRNA(Glu) + L-glutamate + ATP = L-glutamyl-tRNA(Glu) + AMP + diphosphate. Catalyzes the attachment of glutamate to tRNA(Glu) in a two-step reaction: glutamate is first activated by ATP to form Glu-AMP and then transferred to the acceptor end of tRNA(Glu). The polypeptide is Glutamate--tRNA ligase (Agrobacterium fabrum (strain C58 / ATCC 33970) (Agrobacterium tumefaciens (strain C58))).